Consider the following 427-residue polypeptide: Glutamate-1-semialdehyde 2,1-aminomutase (427 aa).

Residue Lys268 is modified to N6-(pyridoxal phosphate)lysine.

Belongs to the class-III pyridoxal-phosphate-dependent aminotransferase family. HemL subfamily. Requires pyridoxal 5'-phosphate as cofactor.

The protein resides in the cytoplasm. The catalysed reaction is (S)-4-amino-5-oxopentanoate = 5-aminolevulinate. Its pathway is porphyrin-containing compound metabolism; protoporphyrin-IX biosynthesis; 5-aminolevulinate from L-glutamyl-tRNA(Glu): step 2/2. The sequence is that of Glutamate-1-semialdehyde 2,1-aminomutase from Methanococcus maripaludis (strain C7 / ATCC BAA-1331).